Here is a 185-residue protein sequence, read N- to C-terminus: Ribosome-recycling factor (185 aa).

Belongs to the RRF family.

The protein localises to the cytoplasm. Functionally, responsible for the release of ribosomes from messenger RNA at the termination of protein biosynthesis. May increase the efficiency of translation by recycling ribosomes from one round of translation to another. This is Ribosome-recycling factor from Ehrlichia ruminantium (strain Welgevonden).